The primary structure comprises 879 residues: MTVAELAKQLRISINRLLDVISEAGIVIHDVENDVLSPEQKVAIAGHMKQRKKQSATEKNAAKSDNKSDKNSKTGAKKTTNRRKTDARKSQSSEKKISPRELAQQLAEKKRLEQGNAQRENEEREYQEALAAEEKRQQQEEARKAKREQKEAEAIRAEEERLQMEAALQAQMQEQERIRQEKEAEEAKLNAEKELRKQQEREKRLAQEKAELERKRQEAIRDVELRESYEEEAETRFHIQSKDRNFGSKNDRSGKRAVKNGDDERSGERRNNARNNTRRRNNDNKKGKFEKPVAPISREVRIPETITVGDLAQKMSVKASELIKTMMKLGSMVTINQLLDQETAALIADEMGHRYVLLKENELEEQVMAQASENKMDVVVRAPVVTIMGHVDHGKTSLLDYIRHTRVVSGEAGGITQHIGAYRVTTERGVITFLDTPGHAAFTAMRARGANVTDIVVLVVAADDGVMPQTKEAIQHAKAANVPLIVAVNKMDKPEADPERVKSELSQEGVISEEWGGEHLFAYVSAKSGMGIDDLLEKILIQAEMLELTAPSSGVGKGVVVESRLDRGRGSVATVLVQSGVMKKGNVMLAGMEYGRIRAMLDEKGKELEEAGPSTPVEILGLSGTPNAGDDVIIVENERKAREIANFRQGKFKEIRIARQQKTKLENLFNNADGEISKVSLMIKADVQGSVEALADSLRELSTDEVAVNIIATGIGGITESDVQLALASSATIIAFNVRAEANAKKLIEEEGGDLRYYSIIYQAIDDVKAAMQGLLSPEIREEIIGLAEVRDVFRSSKFGAVAGCIVEDGLLKRHNPIRVLRNNVVIYEGELESLRRFKDDVNEVRAGTECGLGVKNYNDVRVGDQIECYERVEIERKL.

Disordered stretches follow at residues 45-216 (AGHM…ERKR) and 228-293 (SYEE…EKPV). Basic and acidic residues-rich tracts occupy residues 60–72 (NAAKSDNKSDKNS), 83–99 (RKTDARKSQSSEKKISP), and 107–163 (AEKK…ERLQ). The span at 164 to 173 (MEAALQAQMQ) shows a compositional bias: low complexity. 3 stretches are compositionally biased toward basic and acidic residues: residues 174–216 (EQER…ERKR), 228–271 (SYEE…ERRN), and 280–291 (RNNDNKKGKFEK). The region spanning 380-549 (VRAPVVTIMG…LIQAEMLELT (170 aa)) is the tr-type G domain. A G1 region spans residues 389 to 396 (GHVDHGKT). Residue 389–396 (GHVDHGKT) coordinates GTP. The G2 stretch occupies residues 414-418 (GITQH). The tract at residues 435 to 438 (DTPG) is G3. GTP-binding positions include 435 to 439 (DTPGH) and 489 to 492 (NKMD). A G4 region spans residues 489-492 (NKMD). Positions 525–527 (SAK) are G5.

It belongs to the TRAFAC class translation factor GTPase superfamily. Classic translation factor GTPase family. IF-2 subfamily.

The protein localises to the cytoplasm. Its function is as follows. One of the essential components for the initiation of protein synthesis. Protects formylmethionyl-tRNA from spontaneous hydrolysis and promotes its binding to the 30S ribosomal subunits. Also involved in the hydrolysis of GTP during the formation of the 70S ribosomal complex. The protein is Translation initiation factor IF-2 of Dichelobacter nodosus (strain VCS1703A).